Consider the following 382-residue polypeptide: Serine/threonine-protein phosphatase 2A activator 2 (382 aa).

The interval 363–382 (SHKGVPTLGNRPGIKPIPFD) is disordered.

It belongs to the PTPA-type PPIase family.

The protein resides in the cytoplasm. It catalyses the reaction [protein]-peptidylproline (omega=180) = [protein]-peptidylproline (omega=0). In terms of biological role, PPIases accelerate the folding of proteins. It catalyzes the cis-trans isomerization of proline imidic peptide bonds in oligopeptides. Acts as a regulatory subunit for PP2A-like phosphatases modulating their activity or substrate specificity, probably by inducing a conformational change in the catalytic subunit, a direct target of the PPIase. Can reactivate inactive phosphatase PP2A-phosphatase methylesterase complexes (PP2Ai) in presence of ATP and Mg(2+) by dissociating the inactive form from the complex. The chain is Serine/threonine-protein phosphatase 2A activator 2 (RRD2) from Cryptococcus neoformans var. neoformans serotype D (strain B-3501A) (Filobasidiella neoformans).